The primary structure comprises 145 residues: Ribonuclease H (145 aa).

In terms of domain architecture, RNase H type-1 spans 1 to 141 (MQEVELFTDG…VDELANQAMD (141 aa)). Positions 9, 47, 69, and 133 each coordinate Mg(2+).

The protein belongs to the RNase H family. Monomer. Mg(2+) is required as a cofactor.

Its subcellular location is the cytoplasm. The catalysed reaction is Endonucleolytic cleavage to 5'-phosphomonoester.. Its function is as follows. Endonuclease that specifically degrades the RNA of RNA-DNA hybrids. This Hydrogenovibrio crunogenus (strain DSM 25203 / XCL-2) (Thiomicrospira crunogena) protein is Ribonuclease H.